Consider the following 405-residue polypeptide: Growth/differentiation factor 11 (405 aa).

A signal peptide spans 1-24 (MVLAAPLLLGFLLLALELRPRGEA). Positions 25–296 (AEGPAAAAAA…VLENTKRSRR (272 aa)) are excised as a propeptide. N-linked (GlcNAc...) asparagine glycosylation is present at N92. 4 cysteine pairs are disulfide-bonded: C302/C312, C311/C370, C339/C402, and C343/C404.

This sequence belongs to the TGF-beta family. In terms of assembly, homodimer; disulfide-linked. Interacts directly with ACVR2B. Interacts directly with ACVR2A. Interacts with ACVR1B, TGFBR1 and ACVR1C in an ACVR2B-dependent manner. Interacts with FST isoform 2/FS288. In terms of processing, synthesized as large precursor molecule that undergoes proteolytic cleavage by furin-like proteases. This produces an inactive form consisting of the mature C-terminal portion non-covalently bound to its cleaved N-terminal propeptide. Activation of the mature form requires additional cleavage of the propeptide by a tolloid-like metalloproteinase.

The protein localises to the secreted. In terms of biological role, secreted signal that acts globally to regulate anterior/posterior axial patterning during development. May play critical roles in patterning both mesodermal and neural tissues. It is required for proper vertebral patterning and orofacial development. Signals through activin receptors type-2, ACVR2A and ACVR2B, and activin receptors type-1, ACVR1B, ACVR1C and TGFBR1 leading to the phosphorylation of SMAD2 and SMAD3. In Rattus norvegicus (Rat), this protein is Growth/differentiation factor 11 (Gdf11).